The primary structure comprises 458 residues: ATP synthase subunit beta (458 aa).

148 to 155 (GGAGVGKT) contacts ATP.

The protein belongs to the ATPase alpha/beta chains family. As to quaternary structure, F-type ATPases have 2 components, CF(1) - the catalytic core - and CF(0) - the membrane proton channel. CF(1) has five subunits: alpha(3), beta(3), gamma(1), delta(1), epsilon(1). CF(0) has three main subunits: a(1), b(2) and c(9-12). The alpha and beta chains form an alternating ring which encloses part of the gamma chain. CF(1) is attached to CF(0) by a central stalk formed by the gamma and epsilon chains, while a peripheral stalk is formed by the delta and b chains.

The protein localises to the cell inner membrane. It catalyses the reaction ATP + H2O + 4 H(+)(in) = ADP + phosphate + 5 H(+)(out). Produces ATP from ADP in the presence of a proton gradient across the membrane. The catalytic sites are hosted primarily by the beta subunits. This is ATP synthase subunit beta from Mannheimia succiniciproducens (strain KCTC 0769BP / MBEL55E).